We begin with the raw amino-acid sequence, 310 residues long: Ceramide synthase LOH1 (310 aa).

Transmembrane regions (helical) follow at residues 16-36, 85-105, 131-151, 157-177, 216-236, and 260-280; these read SFPT…FPTI, CIYY…EPWF, FLYM…VFWE, FGVS…SYIC, FVLF…FWIL, and YMFN…WVLI. The TLC domain occupies 76 to 289; the sequence is RKFKESAWKC…IYRMLVKQVQ (214 aa). 2 positions are modified to phosphoserine: Ser300 and Ser302.

In terms of tissue distribution, expressed ubiquitously at high levels. Not observed in pollen.

Its subcellular location is the endoplasmic reticulum membrane. It carries out the reaction (4R)-hydroxysphinganine + a fatty acyl-CoA = an N-acyl-(4R)-4-hydroxysphinganine + CoA + H(+). It catalyses the reaction hexacosanoyl-CoA + (4R)-hydroxysphinganine = N-hexacosanoyl-(4R)-hydroxysphinganine + CoA + H(+). The enzyme catalyses tetracosanoyl-CoA + (4R)-hydroxysphinganine = N-tetracosanoyl-(4R)-hydroxysphinganine + CoA + H(+). Its pathway is sphingolipid metabolism. With respect to regulation, inhibited by the mycotoxin fumonisin B(1), a sphingosine analog mycotoxins produced by pathogenic fungi. Repressed by divalent cation such as magnesium Mg(2+), copper Cu(2+), zinc Zn(2+), manganese Mn(2+), calcium Ca(2+) and cobalt Co(2+). Its function is as follows. Essential for plant growth, promotes cell division in root meristems. Catalyzes the biosynthesis of ceramide sphingolipids with C(16) to C(28) fatty acids, structural membrane lipids involved in membrane trafficking (e.g. early endosomes) and cell polarity (e.g. polar auxin transport related proteins); mostly active with t18:0 and saturated very long saturated fatty acids (C24:0 and C26:0), such as long-chain base (LCB) phytosphingosine (t18:0), lignoceroyl- and hexacosanoyl-CoAs. Mediates resistance to sphinganine-analog mycotoxins (SAMs, e.g. fumonisin B(1)) by restoring the sphingolipid biosynthesis. Could salvage the transport of GPI-anchored proteins from the endoplasmic reticulum to the Golgi apparatus in ceramides-depleted cells after SAM exposure. May prevent precocious cell death by delaying PR1 accumulation during aging. Contributes to hypoxic conditions tolerance (e.g. submergences), especially in the dark, by promoting the formation of very-long-chain (VLC) ceramide species (22:1, 24:1 and 26:1) and of VLC unsaturated ceramides, which are modulating CTR1-mediated ethylene signaling leading to endoplasmic reticulum (ER)-to-nucleus translocation of EIN2 and EIN3. The sequence is that of Ceramide synthase LOH1 from Arabidopsis thaliana (Mouse-ear cress).